We begin with the raw amino-acid sequence, 193 residues long: Putative nucleotidase YqfW (193 aa).

This sequence belongs to the 5'(3')-deoxyribonucleotidase family.

The sequence is that of Putative nucleotidase YqfW (yqfW) from Bacillus subtilis (strain 168).